The chain runs to 322 residues: Olfactory receptor 1J1 (322 aa).

Topologically, residues Met1 to Ala25 are extracellular. An N-linked (GlcNAc...) asparagine glycan is attached at Asn5. A helical membrane pass occupies residues Val26–Ile49. Topologically, residues Gln50–Thr57 are cytoplasmic. The helical transmembrane segment at Pro58–Pro79 threads the bilayer. Over Lys80–Gln100 the chain is Extracellular. Cys97 and Cys189 are oxidised to a cystine. The helical transmembrane segment at Thr101–Tyr120 threads the bilayer. The Cytoplasmic portion of the chain corresponds to Asp121–Ser139. A helical transmembrane segment spans residues Gln140–Leu158. The Extracellular portion of the chain corresponds to His159 to Gln196. A helical membrane pass occupies residues Leu197 to Gly219. The Cytoplasmic portion of the chain corresponds to His220–Lys236. The helical transmembrane segment at Ala237–Tyr259 threads the bilayer. Topologically, residues Phe260–Ile272 are extracellular. A helical membrane pass occupies residues Ile273–Leu292. Residues Arg293–Gly322 lie on the Cytoplasmic side of the membrane.

Belongs to the G-protein coupled receptor 1 family.

It is found in the cell membrane. In terms of biological role, odorant receptor. This chain is Olfactory receptor 1J1, found in Homo sapiens (Human).